A 55-amino-acid chain; its full sequence is uncharacterized protein (55 aa).

It is found in the plastid. This is an uncharacterized protein from Cuscuta reflexa (Southern Asian dodder).